The sequence spans 221 residues: ATP phosphoribosyltransferase (221 aa).

Belongs to the ATP phosphoribosyltransferase family. Short subfamily. Heteromultimer composed of HisG and HisZ subunits.

The protein resides in the cytoplasm. The enzyme catalyses 1-(5-phospho-beta-D-ribosyl)-ATP + diphosphate = 5-phospho-alpha-D-ribose 1-diphosphate + ATP. Its pathway is amino-acid biosynthesis; L-histidine biosynthesis; L-histidine from 5-phospho-alpha-D-ribose 1-diphosphate: step 1/9. Its function is as follows. Catalyzes the condensation of ATP and 5-phosphoribose 1-diphosphate to form N'-(5'-phosphoribosyl)-ATP (PR-ATP). Has a crucial role in the pathway because the rate of histidine biosynthesis seems to be controlled primarily by regulation of HisG enzymatic activity. The polypeptide is ATP phosphoribosyltransferase (Carboxydothermus hydrogenoformans (strain ATCC BAA-161 / DSM 6008 / Z-2901)).